Consider the following 273-residue polypeptide: Undecaprenyl-diphosphatase (273 aa).

The next 7 helical transmembrane spans lie at 6–26 (SLLIAAILGVVEGLTEFLPVS), 45–65 (AKTFEVVIQLGSILAVVVMFW), 90–110 (LTLIHILLGMIPAVVLGLLFH), 116–136 (LFNPINVMYALVVGGLLLIAA), 190–210 (YAASEFSFLLAVPMMMGATAL), 222–242 (GDIPMFAVGFITAFVVALIAI), and 252–272 (ISFIPFAIYRFIVAAAVYVVF).

It belongs to the UppP family.

It localises to the cell inner membrane. It catalyses the reaction di-trans,octa-cis-undecaprenyl diphosphate + H2O = di-trans,octa-cis-undecaprenyl phosphate + phosphate + H(+). Catalyzes the dephosphorylation of undecaprenyl diphosphate (UPP). Confers resistance to bacitracin. The protein is Undecaprenyl-diphosphatase of Escherichia coli O157:H7.